A 484-amino-acid chain; its full sequence is MAAGGNRDGEKRGSRSQADSGFLGLRPTSVDPALRRRRRGPRNKKRGWRRLAEEPLGLEVDQFLEDVRLQERTTGGLLAEAPNEKLFFVDTGFKRKEPRKKRTLVQKKSQRLQKPLRVDLALENHSKIPAPKDILAHQVPNAKKLRRKEELWEKLAKQGELPRDVRKAQARLLSPPTPKAKPGPQDIIERPFYDLWNPDNPLDTPLIGQDAFFLEQTKKKGVRRPQRLHIKPSQVPAVEVIPAGASYNPTFEDHQALLREAHEVELQREKEAEKLERQLALPTSEQAATQESVFREMCEGLLEESDGEDEHEAGRAGQPEAGDGTTEISPTGAAGPEKRMEKKTEQQRRREKAARKLRVQQAALRAARLQHQELFRLRGIKAQVARRLAELARRREQRRIRRLAEADKPRRLGRLKYQAPDIDVQLSSELSGSLRTLKPEGHILRDRFKSFQKRNMIEPRERAKFKRKYKVKLVEKRAYREIQL.

2 disordered regions span residues 1-51 (MAAG…WRRL) and 304-356 (ESDG…AARK). Alanine 2 bears the N-acetylalanine mark. Serine 29 is subject to Phosphoserine. Basic residues predominate over residues 35–49 (RRRRRGPRNKKRGWR). Residues 148 to 437 (KEELWEKLAK…SELSGSLRTL (290 aa)) form a mediates interaction with CDKN2A/isoform tumor suppressor ARF region. Residue serine 305 is modified to Phosphoserine. Residues 336-348 (PEKRMEKKTEQQR) are compositionally biased toward basic and acidic residues. The interval 348 to 392 (RRREKAARKLRVQQAALRAARLQHQELFRLRGIKAQVARRLAELA) is mediates interaction with human herpesvirus 8 protein ORF16. 2 nucleolar localization signal regions span residues 353-401 (AARK…RRIR) and 402-484 (RLAE…EIQL).

This sequence belongs to the NOP53 family. Homooligomer. Interacts with PTEN; regulates PTEN phosphorylation and increases its stability. Interacts with RPL11; retains RPL11 into the nucleolus. Interacts with CDKN2A/isoform tumor suppressor ARF; the interaction is direct and promotes ARF nucleoplasmic relocalization and ubiquitin-mediated proteasomal degradation. Interacts with NPM1; the interaction is direct and competitive with MYC. Interacts with NF2 (via FERM domain); the interaction is direct. Interacts with p53/TP53 (via the oligomerization region); the interaction is direct and may prevent the MDM2-mediated proteasomal degradation of p53/TP53. Interacts with RIGI; may regulate RIGI through USP15-mediated 'Lys-63'-linked deubiquitination. Interacts with UBTF. In terms of processing, ubiquitin-mediated proteasomal degradation is regulated by c-JUN. It is associated with relocalization to the nucleoplasm and decreased homooligomerization. Post-translationally, phosphorylated upon DNA damage probably by ATM and DNA-PK; may regulate NOP53 degradation.

It localises to the nucleus. The protein resides in the nucleolus. Its subcellular location is the nucleoplasm. Its function is as follows. Nucleolar protein which is involved in the integration of the 5S RNP into the ribosomal large subunit during ribosome biogenesis. In ribosome biogenesis, may also play a role in rRNA transcription. Also functions as a nucleolar sensor that regulates the activation of p53/TP53 in response to ribosome biogenesis perturbation, DNA damage and other stress conditions. DNA damage or perturbation of ribosome biogenesis disrupt the interaction between NOP53 and RPL11 allowing RPL11 transport to the nucleoplasm where it can inhibit MDM2 and allow p53/TP53 activation. It may also positively regulate the function of p53/TP53 in cell cycle arrest and apoptosis through direct interaction, preventing its MDM2-dependent ubiquitin-mediated proteasomal degradation. Originally identified as a tumor suppressor, it may also play a role in cell proliferation and apoptosis by positively regulating the stability of PTEN, thereby antagonizing the PI3K-AKT/PKB signaling pathway. May also inhibit cell proliferation and increase apoptosis through its interaction with NF2. May negatively regulate NPM1 by regulating its nucleoplasmic localization, oligomerization and ubiquitin-mediated proteasomal degradation. Thereby, may prevent NPM1 interaction with MYC and negatively regulate transcription mediated by the MYC-NPM1 complex. May also regulate cellular aerobic respiration. In the cellular response to viral infection, may play a role in the attenuation of interferon-beta through the inhibition of RIGI. The protein is Ribosome biogenesis protein NOP53 of Mus musculus (Mouse).